The following is a 218-amino-acid chain: Ribose-5-phosphate isomerase A (218 aa).

Substrate-binding positions include 28-31, 81-84, and 94-97; these read TGST, DGAD, and KGGG. The active-site Proton acceptor is the E103. K121 is a substrate binding site.

The protein belongs to the ribose 5-phosphate isomerase family. As to quaternary structure, homodimer.

It carries out the reaction aldehydo-D-ribose 5-phosphate = D-ribulose 5-phosphate. The protein operates within carbohydrate degradation; pentose phosphate pathway; D-ribose 5-phosphate from D-ribulose 5-phosphate (non-oxidative stage): step 1/1. Its function is as follows. Catalyzes the reversible conversion of ribose-5-phosphate to ribulose 5-phosphate. The polypeptide is Ribose-5-phosphate isomerase A (Vibrio parahaemolyticus serotype O3:K6 (strain RIMD 2210633)).